We begin with the raw amino-acid sequence, 362 residues long: MAQIFNFSSGPAMLPAEVLKQAQQELRDWNGLGTSVMEVSHRGKEFIQVAEEAEKDFRDLLNVPSNYKVLFCHGGGRGQFAAVPLNILGDKTTADYVDAGYWAASAIKEAKKYCTPNVFDAKVTVDGLRAVKPMREWQLSDNAAYMHYCPNETIDGIAIDETPDFGKDVVVAADFSSTILSRPIDVSRYGVIYAGAQKNIGPAGLTIVIVREDLLGKANIACPSILDYSIFNDNGSMFNTPPTFAWYLSGLVFKWLKANGGVAEMDKINQQKAELLYGVIDNSDFYRNDVAKANRSRMNVPFQLADSALDKLFLEESFAAGLHALKGHRVVGGMRASIYNAMPLEGVKALTDFMVEFERRHG.

Residues S9 and R42 each coordinate L-glutamate. Pyridoxal 5'-phosphate contacts are provided by residues 76–77, W102, T153, D174, and Q197; that span reads GR. K198 is modified (N6-(pyridoxal phosphate)lysine). 239–240 is a binding site for pyridoxal 5'-phosphate; sequence NT.

It belongs to the class-V pyridoxal-phosphate-dependent aminotransferase family. SerC subfamily. As to quaternary structure, homodimer. It depends on pyridoxal 5'-phosphate as a cofactor.

The protein localises to the cytoplasm. The catalysed reaction is O-phospho-L-serine + 2-oxoglutarate = 3-phosphooxypyruvate + L-glutamate. It catalyses the reaction 4-(phosphooxy)-L-threonine + 2-oxoglutarate = (R)-3-hydroxy-2-oxo-4-phosphooxybutanoate + L-glutamate. It participates in amino-acid biosynthesis; L-serine biosynthesis; L-serine from 3-phospho-D-glycerate: step 2/3. Its pathway is cofactor biosynthesis; pyridoxine 5'-phosphate biosynthesis; pyridoxine 5'-phosphate from D-erythrose 4-phosphate: step 3/5. Catalyzes the reversible conversion of 3-phosphohydroxypyruvate to phosphoserine and of 3-hydroxy-2-oxo-4-phosphonooxybutanoate to phosphohydroxythreonine. The sequence is that of Phosphoserine aminotransferase from Shigella boydii serotype 4 (strain Sb227).